The chain runs to 505 residues: Putative pentatricopeptide repeat-containing protein At1g26500 (505 aa).

7 PPR repeats span residues 145–179 (NDKT…GYLY), 180–210 (NVET…LKEF), 214–248 (DEIT…GFDV), 249–279 (DIEA…MVSK), 285–319 (DGGF…GVYV), 320–350 (DNLT…VENP), and 351–385 (DISI…GCEP).

Belongs to the PPR family. P subfamily.

In Arabidopsis thaliana (Mouse-ear cress), this protein is Putative pentatricopeptide repeat-containing protein At1g26500.